The primary structure comprises 247 residues: Adenosylcobinamide-GDP ribazoletransferase (247 aa).

The next 5 membrane-spanning stretches (helical) occupy residues 34–54, 59–79, 113–133, 138–158, and 194–214; these read IVMF…IFIL, CGIP…TGGF, GGLA…ELAL, MLAA…LLMY, and VLLL…AIFI.

The protein belongs to the CobS family. The cofactor is Mg(2+).

It localises to the cell inner membrane. The catalysed reaction is alpha-ribazole + adenosylcob(III)inamide-GDP = adenosylcob(III)alamin + GMP + H(+). The enzyme catalyses alpha-ribazole 5'-phosphate + adenosylcob(III)inamide-GDP = adenosylcob(III)alamin 5'-phosphate + GMP + H(+). The protein operates within cofactor biosynthesis; adenosylcobalamin biosynthesis; adenosylcobalamin from cob(II)yrinate a,c-diamide: step 7/7. Functionally, joins adenosylcobinamide-GDP and alpha-ribazole to generate adenosylcobalamin (Ado-cobalamin). Also synthesizes adenosylcobalamin 5'-phosphate from adenosylcobinamide-GDP and alpha-ribazole 5'-phosphate. This Salmonella typhi protein is Adenosylcobinamide-GDP ribazoletransferase.